The sequence spans 103 residues: PTS system lactose-specific EIIA component (103 aa).

Positions 1 to 102 constitute a PTS EIIA type-3 domain; it reads MNREEVQLLG…MKHLLEFYKR (102 aa). His-78 acts as the Tele-phosphohistidine intermediate in catalysis. Position 78 is a phosphohistidine; by HPr (His-78). A Mg(2+)-binding site is contributed by Asp-81.

In terms of assembly, homotrimer. It depends on Mg(2+) as a cofactor.

Its subcellular location is the cytoplasm. The phosphoenolpyruvate-dependent sugar phosphotransferase system (sugar PTS), a major carbohydrate active transport system, catalyzes the phosphorylation of incoming sugar substrates concomitantly with their translocation across the cell membrane. The enzyme II LacEF PTS system is involved in lactose transport. The chain is PTS system lactose-specific EIIA component from Staphylococcus aureus (strain COL).